A 216-amino-acid chain; its full sequence is Imidazole glycerol phosphate synthase subunit HisH (216 aa).

A Glutamine amidotransferase type-1 domain is found at 5–213 (RLAVIDYDAG…VEFVARRLPA (209 aa)). Cys83 serves as the catalytic Nucleophile. Active-site residues include His188 and Glu190.

As to quaternary structure, heterodimer of HisH and HisF.

Its subcellular location is the cytoplasm. The enzyme catalyses 5-[(5-phospho-1-deoxy-D-ribulos-1-ylimino)methylamino]-1-(5-phospho-beta-D-ribosyl)imidazole-4-carboxamide + L-glutamine = D-erythro-1-(imidazol-4-yl)glycerol 3-phosphate + 5-amino-1-(5-phospho-beta-D-ribosyl)imidazole-4-carboxamide + L-glutamate + H(+). The catalysed reaction is L-glutamine + H2O = L-glutamate + NH4(+). It participates in amino-acid biosynthesis; L-histidine biosynthesis; L-histidine from 5-phospho-alpha-D-ribose 1-diphosphate: step 5/9. Functionally, IGPS catalyzes the conversion of PRFAR and glutamine to IGP, AICAR and glutamate. The HisH subunit catalyzes the hydrolysis of glutamine to glutamate and ammonia as part of the synthesis of IGP and AICAR. The resulting ammonia molecule is channeled to the active site of HisF. The protein is Imidazole glycerol phosphate synthase subunit HisH of Synechococcus sp. (strain JA-3-3Ab) (Cyanobacteria bacterium Yellowstone A-Prime).